The primary structure comprises 383 residues: Putative glutamate--cysteine ligase 2 (383 aa).

It belongs to the glutamate--cysteine ligase type 2 family. YbdK subfamily.

The enzyme catalyses L-cysteine + L-glutamate + ATP = gamma-L-glutamyl-L-cysteine + ADP + phosphate + H(+). Functionally, ATP-dependent carboxylate-amine ligase which exhibits weak glutamate--cysteine ligase activity. The polypeptide is Putative glutamate--cysteine ligase 2 (Clavibacter michiganensis subsp. michiganensis (strain NCPPB 382)).